A 451-amino-acid polypeptide reads, in one-letter code: Putative gluconeogenesis factor (451 aa).

The protein belongs to the gluconeogenesis factor family.

Its subcellular location is the cytoplasm. Functionally, required for morphogenesis under gluconeogenic growth conditions. The polypeptide is Putative gluconeogenesis factor (Clostridium acetobutylicum (strain ATCC 824 / DSM 792 / JCM 1419 / IAM 19013 / LMG 5710 / NBRC 13948 / NRRL B-527 / VKM B-1787 / 2291 / W)).